The primary structure comprises 491 residues: Protein DETOXIFICATION 20 (491 aa).

Helical transmembrane passes span 37–57 (LWVV…VSMV), 75–95 (ITFT…AGAL), 120–140 (IVLT…GPIL), 156–176 (LALW…CQMF), 185–205 (IISY…WLLV), 214–234 (GAMT…LLYV), 265–285 (GGML…TGNL), 296–316 (AICI…LAAV), 337–357 (LIAV…FLFL), 381–401 (LLAF…VAIG), 413–433 (LACY…VVGL), and 438–458 (VWIG…VMTL).

This sequence belongs to the multi antimicrobial extrusion (MATE) (TC 2.A.66.1) family.

The protein localises to the membrane. The chain is Protein DETOXIFICATION 20 from Arabidopsis thaliana (Mouse-ear cress).